Reading from the N-terminus, the 445-residue chain is Glycine--tRNA ligase (445 aa).

Residues Arg-97 and Glu-145 each coordinate substrate. ATP-binding positions include 177–179, 187–192, 262–263, and 308–311; these read RNE, FRTCEF, EV, and GLTR. Residue 192–196 coordinates substrate; it reads FEQME. 304-308 lines the substrate pocket; the sequence is ETSAG.

It belongs to the class-II aminoacyl-tRNA synthetase family. In terms of assembly, homodimer.

The protein resides in the cytoplasm. The enzyme catalyses tRNA(Gly) + glycine + ATP = glycyl-tRNA(Gly) + AMP + diphosphate. Its function is as follows. Catalyzes the attachment of glycine to tRNA(Gly). In Borreliella burgdorferi (strain ZS7) (Borrelia burgdorferi), this protein is Glycine--tRNA ligase.